The following is a 341-amino-acid chain: MSDVVSKDRKALFDSAVSFLKDESIKDAPLLKKIEFLKSKGLTEKEIEIAMKEPKKDGIVGDEVSKKIGSTENRASQDMYLYEAMPPTLPHRDWKDYFVMATATAGLLYGAYEVTRRYVIPNILPEAKSKLEGDKKEIDDQFSKIDTVLNAIEAEQAEFRKKESETLKELSDTIAELKQALVQTTRSREKIEDEFRIVKLEVVNMQNTIDKFVSDNDGMQELNNIQKEMESLKSLMNNRMESGNAQDNRLFSISPNGIPGIDTIPSASEILAKMGMQEESDKEKENGSDANKDDNAVPAWKKAREQTIDSNASIPEWQKNTAANEISVPDWQNGQVEDSIP.

At S2 the chain carries N-acetylserine. The SH3-binding signature appears at 86–94 (PPTLPHRDW). A disordered region spans residues 276–341 (MQEESDKEKE…QNGQVEDSIP (66 aa)). Residues 279 to 295 (ESDKEKENGSDANKDDN) show a composition bias toward basic and acidic residues. Polar residues predominate over residues 308–341 (IDSNASIPEWQKNTAANEISVPDWQNGQVEDSIP). Position 313 is a phosphoserine (S313).

The protein belongs to the peroxin-14 family. In terms of assembly, interacts with PEX13 (via SH3 domain); forming the PEX13-PEX14 docking complex. Interacts with PEX5 (via WxxxF/Y motifs). Interacts with PEX7. Interacts with PEX9.

It localises to the peroxisome membrane. Component of the PEX13-PEX14 docking complex, a translocon channel that specifically mediates the import of peroxisomal cargo proteins bound to PEX5 or PEX21 receptors. The PEX13-PEX14 docking complex forms a large import pore which can be opened to a diameter of about 9 nm. Mechanistically, PEX5 (or PEX21) receptor along with cargo proteins associates with the PEX14 subunit of the PEX13-PEX14 docking complex in the cytosol, leading to the insertion of the receptor into the organelle membrane with the concomitant translocation of the cargo into the peroxisome matrix. This Saccharomyces cerevisiae (strain ATCC 204508 / S288c) (Baker's yeast) protein is Peroxisomal membrane protein PEX14.